The primary structure comprises 155 residues: Trypsin/factor XIIA inhibitor (155 aa).

Residues 1-28 (MASSSSSSHRRLILAAAVLLSVLAAASA) form the signal peptide. 5 cysteine pairs are disulfide-bonded: Cys-34–Cys-83, Cys-48–Cys-72, Cys-57–Cys-114, Cys-73–Cys-132, and Cys-85–Cys-143. Arg-62 is an active-site residue. The propeptide at 139 to 155 (GVAECPWILGGGTMPSK) is C-terminal peptide.

It belongs to the protease inhibitor I6 (cereal trypsin/alpha-amylase inhibitor) family. Monomer.

Its subcellular location is the secreted. Its function is as follows. Potent inhibitor of mammalian trypsin and a specific inhibitor of factor XIIa (activated hageman factor). The protein is Trypsin/factor XIIA inhibitor of Zea mays (Maize).